A 963-amino-acid chain; its full sequence is Putative RNA Helicase B962L (963 aa).

Residues 43–229 form the Helicase ATP-binding domain; it reads IPTSLADRVL…FGIGKENIIL (187 aa). Residue 56-63 coordinates ATP; the sequence is SRTGSGKS. The short motif at 167–170 is the DEAH box element; that stretch reads DEAH. In terms of domain architecture, Helicase C-terminal spans 253-459; that stretch reads ACETALTIHK…TIKKNKEGVF (207 aa). Residues 521–541 traverse the membrane as a helical segment; sequence GYFWQAAISDIAIILAVVSVV.

Belongs to the DEAD box helicase family. DEAH subfamily.

It is found in the host membrane. The protein resides in the virion. It catalyses the reaction ATP + H2O = ADP + phosphate + H(+). This chain is Putative RNA Helicase B962L, found in African swine fever virus (isolate Tick/Malawi/Lil 20-1/1983) (ASFV).